Here is a 104-residue protein sequence, read N- to C-terminus: Large ribosomal subunit protein uL24 (104 aa).

The protein belongs to the universal ribosomal protein uL24 family. Part of the 50S ribosomal subunit.

Its function is as follows. One of two assembly initiator proteins, it binds directly to the 5'-end of the 23S rRNA, where it nucleates assembly of the 50S subunit. One of the proteins that surrounds the polypeptide exit tunnel on the outside of the subunit. In Clostridium perfringens (strain SM101 / Type A), this protein is Large ribosomal subunit protein uL24.